The primary structure comprises 267 residues: RWD domain-containing protein 3 (267 aa).

Residues 7–114 enclose the RWD domain; sequence QELSALAAIF…LWIQQNLRLV (108 aa). Interaction with UBE2I/UBC9 stretches follow at residues 13-15 and 100-102; these read AAI and VHE.

Interacts with UBE2I/UBC9, NFKBIA, HIF1A and NCOA2.

The protein resides in the nucleus. It is found in the cytoplasm. Its function is as follows. Enhancer of SUMO conjugation. Via its interaction with UBE2I/UBC9, increases SUMO conjugation to proteins by promoting the binding of E1 and E2 enzymes, thioester linkage between SUMO and UBE2I/UBC9 and transfer of SUMO to specific target proteins which include HIF1A, PIAS, NFKBIA, NR3C1 and TOP1. Positively regulates the NF-kappa-B signaling pathway by enhancing the sumoylation of NF-kappa-B inhibitor alpha (NFKBIA), promoting its stabilization which consequently leads to an increased inhibition of NF-kappa-B transcriptional activity. Negatively regulates the hypoxia-inducible factor-1 alpha (HIF1A) signaling pathway by increasing the sumoylation of HIF1A, promoting its stabilization, transcriptional activity and the expression of its target gene VEGFA during hypoxia. Has no effect on ubiquitination. The chain is RWD domain-containing protein 3 (Rwdd3) from Mus musculus (Mouse).